We begin with the raw amino-acid sequence, 177 residues long: FANCD2 opposite strand protein (177 aa).

The sequence is that of FANCD2 opposite strand protein (FANCD2OS) from Homo sapiens (Human).